Consider the following 399-residue polypeptide: Elongation factor Tu (399 aa).

Residues K10–K209 form the tr-type G domain. The G1 stretch occupies residues G19–T26. Position 19–26 (G19–T26) interacts with GTP. Residue T26 coordinates Mg(2+). A G2 region spans residues G60–A64. Residues D81 to G84 form a G3 region. Residues D81–H85 and N136–D139 each bind GTP. The tract at residues N136 to D139 is G4. Residues S174–L176 form a G5 region.

This sequence belongs to the TRAFAC class translation factor GTPase superfamily. Classic translation factor GTPase family. EF-Tu/EF-1A subfamily. Monomer.

It is found in the cytoplasm. The enzyme catalyses GTP + H2O = GDP + phosphate + H(+). GTP hydrolase that promotes the GTP-dependent binding of aminoacyl-tRNA to the A-site of ribosomes during protein biosynthesis. This is Elongation factor Tu from Campylobacter hominis (strain ATCC BAA-381 / DSM 21671 / CCUG 45161 / LMG 19568 / NCTC 13146 / CH001A).